A 178-amino-acid polypeptide reads, in one-letter code: Bifunctional protein PyrR (178 aa).

Residues 41 to 42 (RR), 103 to 111 (DDVLYTGRT), and Arg-136 contribute to the substrate site. The short motif at 99 to 111 (VILVDDVLYTGRT) is the PRPP-binding element.

It belongs to the purine/pyrimidine phosphoribosyltransferase family. PyrR subfamily. As to quaternary structure, homodimer and homohexamer; in equilibrium.

It catalyses the reaction UMP + diphosphate = 5-phospho-alpha-D-ribose 1-diphosphate + uracil. In terms of biological role, regulates transcriptional attenuation of the pyrimidine nucleotide (pyr) operon by binding in a uridine-dependent manner to specific sites on pyr mRNA. This disrupts an antiterminator hairpin in the RNA and favors formation of a downstream transcription terminator, leading to a reduced expression of downstream genes. Functionally, also displays a weak uracil phosphoribosyltransferase activity which is not physiologically significant. The polypeptide is Bifunctional protein PyrR (Clostridium acetobutylicum (strain ATCC 824 / DSM 792 / JCM 1419 / IAM 19013 / LMG 5710 / NBRC 13948 / NRRL B-527 / VKM B-1787 / 2291 / W)).